The sequence spans 148 residues: Antitoxin Xre (148 aa).

This sequence belongs to the MbcA/ParS/Xre antitoxin family. Homodimer. Forms a complex with cognate toxin Rse.

Functionally, antitoxin component of a type II toxin-antitoxin (TA) system. Neutralizes the activity of cognate toxin Res. The polypeptide is Antitoxin Xre (Yersinia enterocolitica serotype O:8 / biotype 1B (strain NCTC 13174 / 8081)).